We begin with the raw amino-acid sequence, 218 residues long: Octanoyltransferase (218 aa).

Residues 32–218 (GEAAEAIWLL…LRTFPQHFPD (187 aa)) form the BPL/LPL catalytic domain. Residues 71–78 (RGGQYTYH), 151–153 (AIG), and 164–166 (GLS) contribute to the substrate site. Cysteine 182 (acyl-thioester intermediate) is an active-site residue.

This sequence belongs to the LipB family.

It is found in the cytoplasm. The catalysed reaction is octanoyl-[ACP] + L-lysyl-[protein] = N(6)-octanoyl-L-lysyl-[protein] + holo-[ACP] + H(+). It functions in the pathway protein modification; protein lipoylation via endogenous pathway; protein N(6)-(lipoyl)lysine from octanoyl-[acyl-carrier-protein]: step 1/2. In terms of biological role, catalyzes the transfer of endogenously produced octanoic acid from octanoyl-acyl-carrier-protein onto the lipoyl domains of lipoate-dependent enzymes. Lipoyl-ACP can also act as a substrate although octanoyl-ACP is likely to be the physiological substrate. This Cereibacter sphaeroides (strain ATCC 17029 / ATH 2.4.9) (Rhodobacter sphaeroides) protein is Octanoyltransferase.